Reading from the N-terminus, the 417-residue chain is Serine hydroxymethyltransferase (417 aa).

(6S)-5,6,7,8-tetrahydrofolate-binding positions include leucine 121 and 125–127 (GHL). Lysine 229 is subject to N6-(pyridoxal phosphate)lysine. 355–357 (SPF) provides a ligand contact to (6S)-5,6,7,8-tetrahydrofolate.

Belongs to the SHMT family. In terms of assembly, homodimer. Pyridoxal 5'-phosphate serves as cofactor.

It localises to the cytoplasm. The enzyme catalyses (6R)-5,10-methylene-5,6,7,8-tetrahydrofolate + glycine + H2O = (6S)-5,6,7,8-tetrahydrofolate + L-serine. Its pathway is one-carbon metabolism; tetrahydrofolate interconversion. The protein operates within amino-acid biosynthesis; glycine biosynthesis; glycine from L-serine: step 1/1. Functionally, catalyzes the reversible interconversion of serine and glycine with tetrahydrofolate (THF) serving as the one-carbon carrier. This reaction serves as the major source of one-carbon groups required for the biosynthesis of purines, thymidylate, methionine, and other important biomolecules. Also exhibits THF-independent aldolase activity toward beta-hydroxyamino acids, producing glycine and aldehydes, via a retro-aldol mechanism. In Buchnera aphidicola subsp. Acyrthosiphon pisum (strain APS) (Acyrthosiphon pisum symbiotic bacterium), this protein is Serine hydroxymethyltransferase.